A 271-amino-acid chain; its full sequence is 2,3,4,5-tetrahydropyridine-2,6-dicarboxylate N-succinyltransferase (271 aa).

The protein belongs to the transferase hexapeptide repeat family.

It is found in the cytoplasm. It carries out the reaction (S)-2,3,4,5-tetrahydrodipicolinate + succinyl-CoA + H2O = (S)-2-succinylamino-6-oxoheptanedioate + CoA. The protein operates within amino-acid biosynthesis; L-lysine biosynthesis via DAP pathway; LL-2,6-diaminopimelate from (S)-tetrahydrodipicolinate (succinylase route): step 1/3. The protein is 2,3,4,5-tetrahydropyridine-2,6-dicarboxylate N-succinyltransferase of Coxiella burnetii (strain CbuG_Q212) (Coxiella burnetii (strain Q212)).